We begin with the raw amino-acid sequence, 283 residues long: Small ribosomal subunit protein uS3 (283 aa).

The 69-residue stretch at V39–R107 folds into the KH type-2 domain. The disordered stretch occupies residues P209 to E283. The span at L217 to P235 shows a compositional bias: basic and acidic residues. Residues P244 to A260 are compositionally biased toward low complexity.

Belongs to the universal ribosomal protein uS3 family. As to quaternary structure, part of the 30S ribosomal subunit. Forms a tight complex with proteins S10 and S14.

Its function is as follows. Binds the lower part of the 30S subunit head. Binds mRNA in the 70S ribosome, positioning it for translation. The protein is Small ribosomal subunit protein uS3 of Herminiimonas arsenicoxydans.